We begin with the raw amino-acid sequence, 636 residues long: DNA mismatch repair protein MutL (636 aa).

A disordered region spans residues 362–393; that stretch reads RKTPEVHEEAEKPEFLVKQEAKNSEEPKNETE. Residues 363-393 are compositionally biased toward basic and acidic residues; the sequence is KTPEVHEEAEKPEFLVKQEAKNSEEPKNETE.

It belongs to the DNA mismatch repair MutL/HexB family.

Functionally, this protein is involved in the repair of mismatches in DNA. It is required for dam-dependent methyl-directed DNA mismatch repair. May act as a 'molecular matchmaker', a protein that promotes the formation of a stable complex between two or more DNA-binding proteins in an ATP-dependent manner without itself being part of a final effector complex. The sequence is that of DNA mismatch repair protein MutL from Lactobacillus helveticus (strain DPC 4571).